A 446-amino-acid chain; its full sequence is Mycosin-1 (446 aa).

Positions 1-21 (MHRIFLITVALALLTASPASA) are cleaved as a signal peptide. Residues 24–43 (PPPIDPGALPPDVTGPDQPT) are disordered. A Peptidase S8 domain is found at 64-387 (PWSNTYLGVA…AGVIDAVAAL (324 aa)). Residues Asp-90, His-121, and Ser-332 each act as charge relay system in the active site. Residues 419-439 (ITAVALVAVGLTLALGLGALA) form a helical membrane-spanning segment.

Belongs to the peptidase S8 family.

The protein localises to the cell membrane. Its function is as follows. May play a dual role in regulation of ESX-1 secretion and virulence. Acts as a protease that cleaves EspB. Essential for ESX-1 function, required for early replication in macrophages and full virulence in mice. This is Mycosin-1 from Mycobacterium tuberculosis (strain ATCC 25618 / H37Rv).